Reading from the N-terminus, the 29-residue chain is Glucagon (29 aa).

This sequence belongs to the glucagon family.

The protein localises to the secreted. Its function is as follows. Glucagon plays a key role in glucose metabolism and homeostasis. Regulates blood glucose by increasing gluconeogenesis and decreasing glycolysis. This is Glucagon (GCG) from Meleagris gallopavo (Wild turkey).